Here is a 489-residue protein sequence, read N- to C-terminus: Rhamnulokinase (489 aa).

Position 13 to 17 (13 to 17 (ASSGR)) interacts with ATP. A disulfide bridge connects residues Cys68 and Cys222. Residues Gly83 and 236-238 (HDT) each bind substrate. Asp237 functions as the Proton acceptor in the catalytic mechanism. Thr259 serves as a coordination point for ATP. Asn296 lines the substrate pocket. Gln304 contributes to the ATP binding site. The cysteines at positions 353 and 370 are disulfide-linked. Gly402 is a binding site for ATP. Residues Cys413 and Cys417 are joined by a disulfide bond.

This sequence belongs to the rhamnulokinase family. Monomer. The cofactor is Mg(2+).

The enzyme catalyses L-rhamnulose + ATP = L-rhamnulose 1-phosphate + ADP + H(+). It participates in carbohydrate degradation; L-rhamnose degradation; glycerone phosphate from L-rhamnose: step 2/3. Involved in the catabolism of L-rhamnose (6-deoxy-L-mannose). Catalyzes the transfer of the gamma-phosphate group from ATP to the 1-hydroxyl group of L-rhamnulose to yield L-rhamnulose 1-phosphate. The protein is Rhamnulokinase of Escherichia coli (strain 55989 / EAEC).